Here is a 379-residue protein sequence, read N- to C-terminus: 3-dehydroquinate synthase (379 aa).

Residues 113–117 (GVIGD), 137–138 (TS), K150, and K159 each bind NAD(+). Zn(2+) is bound by residues E192, H256, and H274.

Belongs to the sugar phosphate cyclases superfamily. Dehydroquinate synthase family. Co(2+) is required as a cofactor. The cofactor is Zn(2+). NAD(+) serves as cofactor.

It localises to the cytoplasm. The enzyme catalyses 7-phospho-2-dehydro-3-deoxy-D-arabino-heptonate = 3-dehydroquinate + phosphate. Its pathway is metabolic intermediate biosynthesis; chorismate biosynthesis; chorismate from D-erythrose 4-phosphate and phosphoenolpyruvate: step 2/7. Catalyzes the conversion of 3-deoxy-D-arabino-heptulosonate 7-phosphate (DAHP) to dehydroquinate (DHQ). The polypeptide is 3-dehydroquinate synthase (Zymomonas mobilis subsp. mobilis (strain ATCC 31821 / ZM4 / CP4)).